Consider the following 428-residue polypeptide: Histidinol dehydrogenase (428 aa).

Residues serine 232, glutamine 254, and histidine 257 each contribute to the substrate site. Positions 254 and 257 each coordinate Zn(2+). Residues glutamate 324 and histidine 325 each act as proton acceptor in the active site. Substrate is bound by residues histidine 325, aspartate 358, glutamate 412, and histidine 417. Aspartate 358 contributes to the Zn(2+) binding site. A Zn(2+)-binding site is contributed by histidine 417.

It belongs to the histidinol dehydrogenase family. Requires Zn(2+) as cofactor.

It carries out the reaction L-histidinol + 2 NAD(+) + H2O = L-histidine + 2 NADH + 3 H(+). It functions in the pathway amino-acid biosynthesis; L-histidine biosynthesis; L-histidine from 5-phospho-alpha-D-ribose 1-diphosphate: step 9/9. Its function is as follows. Catalyzes the sequential NAD-dependent oxidations of L-histidinol to L-histidinaldehyde and then to L-histidine. This chain is Histidinol dehydrogenase, found in Thermotoga maritima (strain ATCC 43589 / DSM 3109 / JCM 10099 / NBRC 100826 / MSB8).